Reading from the N-terminus, the 802-residue chain is MGHPPLEFSDCYLDSPDFRQRLKYYEEELERTNKFIKDVIKDGSALISAMRNYSSAVQKFSQTLQSFQFDFIGDTLTDDEINIAESFKEFAELLNEVENERMMMVQNASDLLIKPLETFRKEQIGFTKERKKKFEKDGERFYSLLDRHLHLSSKKKESQLLEADLQVDKERHNFFESSLDYVYQIQEVQESKKFNIVEPVLAFLHSLFISNSLTVELTQDFLPYKQQLQLSLQNTRNHFSSTREEMEELKKRMKEAPQTCKLPGQPTIEGYLYTQEKWALGISWAKYYCRYEKETRMLTMIPMEQKPGAKQGPVDLTLKYCVRRKTESIDKRFCFDIETNERPGTITLQAPSEANRRLWMEAMDGKEPIYHTPITKQEEMELNEVGFKFVRKCINFIETKGIKTEGLYRTVGSNIQVQKLLYAFFDPKCPGDVDFHNSDWDIKTITSSLKFYLRNLSEPVMTYKLHKELVSAAKSDNLDYRLGAIHSLVYKLPEKNREMLELLIKHLVNVCEHSKENLMTPSNMGVIFGPTLMRAQEDTVAAMMNIKFQNIVVEILIEHFGKIYLGPPEDSQVPPVPPPRVTARRHKPITISKRLLREKTVFYTSSLDENKDESHHQTPNGTITSNLDPPKLLQHLKPPMQKSGETDPGRKSPSRPVSDCQSEPCLETDVGRLLFRLQDGGTKATPKASNGPVPGSGHTKTSSFHIRRPAPRPMAHHKEGDTDGFSKVRPPGEKQTIIRPPVRPPDPPCRSITPQKPEPKPETGSGNADEIPSSVVASRTRFFETASRKTGSSQGKLPGDES.

A PH domain is found at 265–368; that stretch reads QPTIEGYLYT…WMEAMDGKEP (104 aa). A Rho-GAP domain is found at 380-564; the sequence is MELNEVGFKF…ILIEHFGKIY (185 aa). Disordered stretches follow at residues 606–665 and 681–802; these read SLDE…SEPC and GTKA…GDES. Residues 617 to 627 show a composition bias toward polar residues; it reads QTPNGTITSNL. Residues 716-732 are compositionally biased toward basic and acidic residues; it reads HHKEGDTDGFSKVRPPG.

Interacts with HOMER1. Interacts with AMPA receptor complexes. Interacts with SH3GL2 (endophilin-A1). Interacts (via C-terminus) with NR1D1.

It is found in the postsynapse. The protein resides in the presynapse. Its subcellular location is the cell projection. The protein localises to the axon. It localises to the dendritic spine. It is found in the dendrite. The protein resides in the cytoplasm. Stimulates GTP hydrolysis of members of the Rho family. Its action on RHOA activity and signaling is implicated in growth and stabilization of dendritic spines, and therefore in synaptic function. Critical for the stabilization of AMPA receptors at postsynaptic sites. Critical for the regulation of synaptic vesicle endocytosis at presynaptic terminals. Required for the localization of NR1D1 to dendrites, can suppress its repressor activity and protect it from proteasomal degradation. The sequence is that of Oligophrenin-1 (Ophn1) from Mus musculus (Mouse).